The sequence spans 447 residues: Sporulation protein YpeB (447 aa).

The protein belongs to the YpeB family.

In terms of biological role, required for spore cortex hydrolysis during germination. Appears to be required for either expression, localization, activation or function of SleB. The protein is Sporulation protein YpeB of Halalkalibacterium halodurans (strain ATCC BAA-125 / DSM 18197 / FERM 7344 / JCM 9153 / C-125) (Bacillus halodurans).